A 227-amino-acid polypeptide reads, in one-letter code: PKHD-type hydroxylase Bxeno_B2756 (227 aa).

The region spanning Gln80–Ser179 is the Fe2OG dioxygenase domain. Residues His98, Asp100, and His160 each coordinate Fe cation. Arg170 contributes to the 2-oxoglutarate binding site.

It depends on Fe(2+) as a cofactor. The cofactor is L-ascorbate.

The chain is PKHD-type hydroxylase Bxeno_B2756 from Paraburkholderia xenovorans (strain LB400).